Reading from the N-terminus, the 277-residue chain is Undecaprenyl-diphosphatase (277 aa).

Transmembrane regions (helical) follow at residues 47-67, 85-105, 108-128, 183-203, 218-238, and 249-269; these read FNIIIQLAAILAVVWEFRGKI, VNLLIAFFPAVILGVLFADLI, WLFNPITVALALVVGGVIMLW, AATEFSFFLAMPTMVGAAVYS, VFAVGFVTSFVFAMVAVRALL, and FAWYRIAFGLLILATWQFHLI.

Belongs to the UppP family.

The protein resides in the cell inner membrane. The enzyme catalyses di-trans,octa-cis-undecaprenyl diphosphate + H2O = di-trans,octa-cis-undecaprenyl phosphate + phosphate + H(+). Its function is as follows. Catalyzes the dephosphorylation of undecaprenyl diphosphate (UPP). Confers resistance to bacitracin. The chain is Undecaprenyl-diphosphatase from Pseudomonas paraeruginosa (strain DSM 24068 / PA7) (Pseudomonas aeruginosa (strain PA7)).